A 122-amino-acid chain; its full sequence is Nuclear transcription factor Y subunit beta (122 aa).

A subunit association domain (SAD) region spans residues 1–12 (VQECVSEFISFI). The tract at residues 1 to 57 (VQECVSEFISFITSEASERCHQEKRKTINGEDILFAMSTLGFDSYVEPLKLYLQKFR) is b domain. The tract at residues 58–122 (EAMKGEKGIG…ISGVQQIQFS (65 aa)) is c domain.

Belongs to the NFYB/HAP3 subunit family. As to quaternary structure, heterotrimeric transcription factor composed of three components, NF-YA, NF-YB and NF-YC. NF-YB and NF-YC must interact and dimerize for NF-YA association and DNA binding.

It localises to the nucleus. Component of the sequence-specific heterotrimeric transcription factor (NF-Y) which specifically recognizes a 5'-CCAAT-3' box motif found in the promoters of its target genes. NF-Y can function as both an activator and a repressor, depending on its interacting cofactors. This chain is Nuclear transcription factor Y subunit beta (nfyb), found in Xenopus laevis (African clawed frog).